The following is a 696-amino-acid chain: MADPTTYRPAPGTIPTEPGVYKFRDENRRVIYVGKAKNLRSRLSNYFQDVTQLHPRTRQMVFAASSVEWTVVSSEVEALQLEYTWIKRFDPRFNVKYRDDKTYPMLAVSTGERFPRAFFFRGPRRKGVRYFGPYSHAWAVRETLDLLTRVFPMRTCSKGVFNRHESLGRPCLLGYIDKCAAPCVGRVSEEEHREIVDGFTSFMAGHTDKVTRKLNADMMAAAEELDFERAARLRDDLEAIDKVMEKQAVVLGDGTDADIIAFATDQLEAAVQVFNIRGGRIRGQRGWVVDKPGDYAGLLVDATTQPEGDAPETDPALPFLMQDFLVQFYGDAVERAETEAKEDAAVIERRGVDKHSFEEAAPVTRASVVPREILVQVAPNEAEQTLKVLEELRGAGVDARVPQRGDKRALMETVERNAKELLKQHKLKRVGDLTARSAALQELQEALDMEQAPLRIECTDISHIQGTDVVASLVVFEDGLPRKSDYRRYRVKEAAGDGHSNDVASIAEITRRRFLRHNQDKLAVPEAEEFDGSTFSDEKVEEMSTDARRFAYPPQIFIVDGGAPQVAAAQEVFDELGIVDVVLIGLAKRLEEIWLPGDPDPVILPRNSQALFLLQQIRDEAHRFAITYHRQQRSKRMRVSELDSIKGLGQSRRTELVKHFGSVAKLKEASVEDISQVKGFGPKLAEAVYEGLHASK.

A GIY-YIG domain is found at Thr16–Val95. Residues Asp208 to Val243 enclose the UVR domain.

Belongs to the UvrC family. Interacts with UvrB in an incision complex.

The protein localises to the cytoplasm. Its function is as follows. The UvrABC repair system catalyzes the recognition and processing of DNA lesions. UvrC both incises the 5' and 3' sides of the lesion. The N-terminal half is responsible for the 3' incision and the C-terminal half is responsible for the 5' incision. This is UvrABC system protein C from Corynebacterium glutamicum (strain R).